The sequence spans 495 residues: NADH-ubiquinone oxidoreductase chain 4 (495 aa).

The next 15 membrane-spanning stretches (helical) occupy residues 9-29 (YFDL…LLFI), 39-59 (LIGL…WIQF), 89-109 (LSLF…LVGW), 118-138 (EYII…CMLD), 139-159 (LLLF…IIGV), 173-193 (FFLY…LILL), 214-234 (ILLW…VPVH), 245-265 (PTAG…YGFL), 272-292 (FPEA…IAII), 313-333 (VAHM…GIGG), 335-355 (ILLM…VGVL), 367-387 (YGGL…FTLA), 388-408 (NMSL…VGAF), 413-433 (LVAT…LWLY), and 457-477 (VFIF…PKVF).

This sequence belongs to the complex I subunit 4 family.

The protein localises to the mitochondrion membrane. It carries out the reaction a ubiquinone + NADH + 5 H(+)(in) = a ubiquinol + NAD(+) + 4 H(+)(out). In terms of biological role, core subunit of the mitochondrial membrane respiratory chain NADH dehydrogenase (Complex I) that is believed to belong to the minimal assembly required for catalysis. Complex I functions in the transfer of electrons from NADH to the respiratory chain. The immediate electron acceptor for the enzyme is believed to be ubiquinone. The chain is NADH-ubiquinone oxidoreductase chain 4 (ND4) from Triticum aestivum (Wheat).